Here is a 102-residue protein sequence, read N- to C-terminus: Small ribosomal subunit protein uS10 (102 aa).

It belongs to the universal ribosomal protein uS10 family. As to quaternary structure, part of the 30S ribosomal subunit.

Involved in the binding of tRNA to the ribosomes. The chain is Small ribosomal subunit protein uS10 from Methanospirillum hungatei JF-1 (strain ATCC 27890 / DSM 864 / NBRC 100397 / JF-1).